Here is a 928-residue protein sequence, read N- to C-terminus: Putative replication origin binding protein (928 aa).

Positions 386–516 (NIVPPKGHIT…QVLRDILMTA (131 aa)) constitute a Helicase ATP-binding domain. 399–406 (ASLGTGKT) is an ATP binding site. The DEAD box signature appears at 484-487 (DECD).

This sequence belongs to the herpesviridae oribp family.

Functionally, displays bipolar ssDNA and dsDNA unwinding activities that require the same core catalytic residues for unwinding in either direction, the 3'-5' direction being more robust. The protein is Putative replication origin binding protein of Escherichia coli (Enterobacteria phage T5).